A 688-amino-acid chain; its full sequence is Probable transcription factor gsfR1 (688 aa).

Over residues 1–16 (MSDGPETAEGDTDDAV) the composition is skewed to acidic residues. Positions 1-95 (MSDGPETAEG…TPVSSRGSIA (95 aa)) are disordered. Residues 24–36 (RVASESSARSQPR) show a composition bias toward polar residues. Residues 58–75 (EHSKEKNVSRRLPTEKTP) are compositionally biased toward basic and acidic residues.

It is found in the nucleus. Probable transcription factor that regulates expression of the gene cluster that mediates the biosynthesis of Griseofulvin, an important antifungal drug that has been in use for a long time for treating dermatophyte infections. This is Probable transcription factor gsfR1 from Penicillium aethiopicum.